The following is a 304-amino-acid chain: Glutaminase (304 aa).

Residues serine 63, asparagine 114, glutamate 158, asparagine 165, tyrosine 189, tyrosine 240, and valine 258 each contribute to the substrate site.

It belongs to the glutaminase family. As to quaternary structure, homotetramer.

The enzyme catalyses L-glutamine + H2O = L-glutamate + NH4(+). This chain is Glutaminase, found in Shewanella sp. (strain ANA-3).